The chain runs to 210 residues: Ribonuclease HII (210 aa).

The 190-residue stretch at 18-207 (RFVAGVDEVG…VHKILCKEET (190 aa)) folds into the RNase H type-2 domain. Positions 24, 25, and 115 each coordinate a divalent metal cation.

It belongs to the RNase HII family. It depends on Mn(2+) as a cofactor. Requires Mg(2+) as cofactor.

The protein resides in the cytoplasm. It catalyses the reaction Endonucleolytic cleavage to 5'-phosphomonoester.. Its function is as follows. Endonuclease that specifically degrades the RNA of RNA-DNA hybrids. This Paracoccus denitrificans (strain Pd 1222) protein is Ribonuclease HII.